Consider the following 140-residue polypeptide: 3-hydroxyacyl-[acyl-carrier-protein] dehydratase FabZ (140 aa).

Residue H48 is part of the active site.

Belongs to the thioester dehydratase family. FabZ subfamily.

Its subcellular location is the cytoplasm. It catalyses the reaction a (3R)-hydroxyacyl-[ACP] = a (2E)-enoyl-[ACP] + H2O. In terms of biological role, involved in unsaturated fatty acids biosynthesis. Catalyzes the dehydration of short chain beta-hydroxyacyl-ACPs and long chain saturated and unsaturated beta-hydroxyacyl-ACPs. This chain is 3-hydroxyacyl-[acyl-carrier-protein] dehydratase FabZ, found in Ligilactobacillus salivarius (strain UCC118) (Lactobacillus salivarius).